Reading from the N-terminus, the 244-residue chain is MFGWLKKLFDMILRIEMEFYTRQEECILSLSGYIDSVSDKKYKPESHAKRKQMWASMYGMQEWDDTEWGLLKDDIDNMYDGAENNLASILTFLQDMGYEKGYADMVLRNLCHNNWIKDETRAALVDIWLNHTMLDSGETINHMYGDIIPLNRESYVTEFRAKVLSGCLPINSSIDDLKDAVIDITTKKEKGKMINTILQVVGDKTHDQPIIPAANSASVVIDMPSPKKKRLHEKKLDKTALLAD.

This is an uncharacterized protein from Ostreid herpesvirus 1 (isolate France) (OsHV-1).